A 500-amino-acid polypeptide reads, in one-letter code: Carnosic acid synthase (500 aa).

A helical transmembrane segment spans residues 4–24; that stretch reads LILLSLAFLASCVVAYSRRRP. Position 443 (C443) interacts with heme.

The protein belongs to the cytochrome P450 family. Heme serves as cofactor. Expressed in leaf glandular trichomes.

The protein localises to the membrane. It carries out the reaction 11-hydroxyferruginol + 3 reduced [NADPH--hemoprotein reductase] + 3 O2 = carnosate + 3 oxidized [NADPH--hemoprotein reductase] + 4 H2O + 4 H(+). The enzyme catalyses miltiradiene + 2 reduced [NADPH--hemoprotein reductase] + 2 O2 = miltiradien-20-al + 2 oxidized [NADPH--hemoprotein reductase] + 3 H2O + 2 H(+). It catalyses the reaction ferruginol + 3 reduced [NADPH--hemoprotein reductase] + 3 O2 = pisiferate + 3 oxidized [NADPH--hemoprotein reductase] + 4 H2O + 4 H(+). It participates in secondary metabolite biosynthesis; terpenoid biosynthesis. Functionally, monooxygenase involved in the biosynthesis of carnosate, a potent antioxidant labdane-related diterpene natural product. Catalyzes the oxidation of 11-hydroxyferruginol to produce carnosate. Mediates the conversion of miltiradien into miltiradien-20-al. Also involved in the production of pisiferic acid and derivative products from ferruginol. This chain is Carnosic acid synthase, found in Salvia pomifera (Apple sage).